The chain runs to 300 residues: Protein SPEAR2 (300 aa).

Residues 1 to 11 (MCSNNNTSSGS) show a composition bias toward polar residues. A disordered region spans residues 1–64 (MCSNNNTSSG…PPLSSSPSLP (64 aa)). Basic residues predominate over residues 25-38 (CRKKQKKDKVRRRG). The short motif at 37 to 45 (RGPGVAELE) is the SPL element. Over residues 43 to 54 (ELEKIRLQEEYK) the composition is skewed to basic and acidic residues. Low complexity predominate over residues 55-64 (PPLSSSPSLP). Residues 294-300 (IDLNLKL) carry the EAR motif.

In terms of assembly, homodimer and heterodimer with SPL and SPEARs. Interacts with SPL, SPEAR1, SPEAR3 and SPEAR4. In terms of tissue distribution, expressed in leaves.

Adapter-like transcriptional repressor recruiting TPL/TPR corepressors to inhibit TCP transcription factors. May be involved in leaf development. The polypeptide is Protein SPEAR2 (Arabidopsis thaliana (Mouse-ear cress)).